A 329-amino-acid chain; its full sequence is Beta-ketoacyl-[acyl-carrier-protein] synthase III (329 aa).

Catalysis depends on residues Cys123 and His256. The segment at Gln257 to Arg261 is ACP-binding. Residue Asn286 is part of the active site.

Belongs to the thiolase-like superfamily. FabH family. As to quaternary structure, homodimer.

It localises to the cytoplasm. The catalysed reaction is malonyl-[ACP] + acetyl-CoA + H(+) = 3-oxobutanoyl-[ACP] + CO2 + CoA. It functions in the pathway lipid metabolism; fatty acid biosynthesis. Functionally, catalyzes the condensation reaction of fatty acid synthesis by the addition to an acyl acceptor of two carbons from malonyl-ACP. Catalyzes the first condensation reaction which initiates fatty acid synthesis and may therefore play a role in governing the total rate of fatty acid production. Possesses both acetoacetyl-ACP synthase and acetyl transacylase activities. Its substrate specificity determines the biosynthesis of branched-chain and/or straight-chain of fatty acids. The chain is Beta-ketoacyl-[acyl-carrier-protein] synthase III from Burkholderia vietnamiensis (strain G4 / LMG 22486) (Burkholderia cepacia (strain R1808)).